Reading from the N-terminus, the 500-residue chain is Hepatic triacylglycerol lipase (500 aa).

Residues 1 to 21 form the signal peptide; it reads MENPLCVSIFLFYCILIQSSA. The interval 23–44 is disordered; it reads GQSLGPESFGRRSRAAETNKTP. N-linked (GlcNAc...) asparagine glycans are attached at residues asparagine 67 and asparagine 78. Serine 168 (nucleophile) is an active-site residue. Residue aspartate 194 is the Charge relay system of the active site. The interval 254–277 is essential for determining substrate specificity; that stretch reads CHFLELYKHFAKHGLNAITRTVKC. Histidine 279 (charge relay system) is an active-site residue. The region spanning 353-487 is the PLAT domain; the sequence is YHYQFKIRFI…HPAREKTFVR (135 aa). 2 N-linked (GlcNAc...) asparagine glycosylation sites follow: asparagine 363 and asparagine 398.

Belongs to the AB hydrolase superfamily. Lipase family. Homodimer.

The protein resides in the secreted. The enzyme catalyses a triacylglycerol + H2O = a diacylglycerol + a fatty acid + H(+). It carries out the reaction a 1-acyl-sn-glycero-3-phosphocholine + H2O = sn-glycerol 3-phosphocholine + a fatty acid + H(+). It catalyses the reaction a 1,2-diacyl-sn-glycero-3-phosphocholine + H2O = a 2-acyl-sn-glycero-3-phosphocholine + a fatty acid + H(+). The catalysed reaction is 1,2,3-tri-(9Z-octadecenoyl)-glycerol + H2O = di-(9Z)-octadecenoylglycerol + (9Z)-octadecenoate + H(+). The enzyme catalyses 1,2-di-(9Z-octadecenoyl)-sn-glycero-3-phosphocholine + H2O = (9Z-octadecenoyl)-sn-glycero-3-phosphocholine + (9Z)-octadecenoate + H(+). It carries out the reaction 1,2,3-tributanoylglycerol + H2O = dibutanoylglycerol + butanoate + H(+). It catalyses the reaction 1,2-dihexadecanoyl-sn-glycero-3-phosphocholine + H2O = hexadecanoyl-sn-glycero-3-phosphocholine + hexadecanoate + H(+). The catalysed reaction is 1,2-di-(9Z-octadecenoyl)-sn-glycerol + H2O = 2-(9Z-octadecenoyl)-glycerol + (9Z)-octadecenoate + H(+). The enzyme catalyses 1,2,3-tri-(9Z-octadecenoyl)-glycerol + H2O = 2,3-di-(9Z)-octadecenoyl-sn-glycerol + (9Z)-octadecenoate + H(+). It carries out the reaction 1-(9Z-octadecenoyl)-sn-glycero-3-phospho-L-serine + H2O = sn-glycero-3-phospho-L-serine + (9Z)-octadecenoate + H(+). It catalyses the reaction 1-hexadecanoyl-sn-glycero-3-phosphocholine + H2O = sn-glycerol 3-phosphocholine + hexadecanoate + H(+). The catalysed reaction is 1,3-di-(9Z-octadecenoyl)-glycerol + H2O = 3-(9Z-octadecenoyl)-sn-glycerol + (9Z)-octadecenoate + H(+). Catalyzes the hydrolysis of triglycerides and phospholipids present in circulating plasma lipoproteins, including chylomicrons, intermediate density lipoproteins (IDL), low density lipoproteins (LDL) of large size and high density lipoproteins (HDL), releasing free fatty acids (FFA) and smaller lipoprotein particles. Also exhibits lysophospholipase activity. Can hydrolyze both neutral lipid and phospholipid substrates but shows a greater binding affinity for neutral lipid substrates than phospholipid substrates. In native LDL, preferentially hydrolyzes the phosphatidylcholine species containing polyunsaturated fatty acids at sn-2 position. This is Hepatic triacylglycerol lipase (LIPC) from Bos taurus (Bovine).